Consider the following 687-residue polypeptide: Immune inhibitor A (687 aa).

Residues 1–12 are compositionally biased toward basic and acidic residues; sequence MKDAKADTKEKL. The or 32 signal peptide spans 1–25; that stretch reads MKDAKADTKEKLNQPATGTPAATGP. The disordered stretch occupies residues 1–43; that stretch reads MKDAKADTKEKLNQPATGTPAATGPVKGGLNGKVPTSPAKQKA. Residues 26-40 constitute a propeptide that is removed on maturation; that stretch reads VKGGLNGKVPTSPAK. H266 is a binding site for Zn(2+). The active site involves E267. Position 270 (H270) interacts with Zn(2+).

This sequence belongs to the peptidase M6 family. Zn(2+) is required as a cofactor. It depends on Ca(2+) as a cofactor.

The protein localises to the secreted. In terms of biological role, neutral metalloprotease that is secreted to degrade antibacterial proteins produced by the insect host for its defense (attacins and cecropins). Probably degrades some unknown crucial protein(s) too, since it is toxic when injected to insect larvae. This chain is Immune inhibitor A (ina), found in Bacillus thuringiensis subsp. alesti.